A 252-amino-acid chain; its full sequence is 3-dehydroquinate dehydratase (252 aa).

Residues serine 21, 46–48 (EWR), and arginine 82 each bind 3-dehydroquinate. Histidine 143 serves as the catalytic Proton donor/acceptor. Lysine 170 serves as the catalytic Schiff-base intermediate with substrate. 3-dehydroquinate is bound by residues arginine 213, serine 232, and glutamine 236.

Belongs to the type-I 3-dehydroquinase family. Dimer of dimers.

It catalyses the reaction 3-dehydroquinate = 3-dehydroshikimate + H2O. It participates in metabolic intermediate biosynthesis; chorismate biosynthesis; chorismate from D-erythrose 4-phosphate and phosphoenolpyruvate: step 3/7. Its activity is regulated as follows. Inhibited by (2R)-2-methyl-3-dehydroquinic acid. Involved in the third step of the chorismate pathway, which leads to the biosynthesis of aromatic amino acids. Catalyzes the cis-dehydration of 3-dehydroquinate (DHQ) and introduces the first double bond of the aromatic ring to yield 3-dehydroshikimate. The reaction involves the formation of an imine intermediate between the keto group of 3-dehydroquinate and the epsilon-amino group of Lys-170 at the active site. In Salmonella typhi, this protein is 3-dehydroquinate dehydratase.